The following is a 296-amino-acid chain: Acetylglutamate kinase (296 aa).

Substrate is bound by residues 67-68, R89, and N194; that span reads GG.

The protein belongs to the acetylglutamate kinase family. ArgB subfamily.

It is found in the cytoplasm. The catalysed reaction is N-acetyl-L-glutamate + ATP = N-acetyl-L-glutamyl 5-phosphate + ADP. It participates in amino-acid biosynthesis; L-arginine biosynthesis; N(2)-acetyl-L-ornithine from L-glutamate: step 2/4. Catalyzes the ATP-dependent phosphorylation of N-acetyl-L-glutamate. The polypeptide is Acetylglutamate kinase (Brucella anthropi (strain ATCC 49188 / DSM 6882 / CCUG 24695 / JCM 21032 / LMG 3331 / NBRC 15819 / NCTC 12168 / Alc 37) (Ochrobactrum anthropi)).